A 54-amino-acid chain; its full sequence is Small ribosomal subunit protein uS14 (54 aa).

Zn(2+) is bound by residues C19, C22, C37, and C40.

This sequence belongs to the universal ribosomal protein uS14 family. Zinc-binding uS14 subfamily. In terms of assembly, part of the 30S ribosomal subunit. Zn(2+) serves as cofactor.

Functionally, binds 16S rRNA, required for the assembly of 30S particles. This Aeropyrum pernix (strain ATCC 700893 / DSM 11879 / JCM 9820 / NBRC 100138 / K1) protein is Small ribosomal subunit protein uS14.